Consider the following 122-residue polypeptide: Large ribosomal subunit protein uL14c (122 aa).

It belongs to the universal ribosomal protein uL14 family. In terms of assembly, part of the 50S ribosomal subunit.

The protein localises to the plastid. It localises to the chloroplast. Binds to 23S rRNA. In Coffea arabica (Arabian coffee), this protein is Large ribosomal subunit protein uL14c.